We begin with the raw amino-acid sequence, 197 residues long: U1 small nuclear ribonucleoprotein C (197 aa).

The segment at 4–36 (YYCEYCDIYLTHSSPVGRRQHNQGRKHISAKIE) adopts a Matrin-type zinc-finger fold. Residues 128-137 (FHNNKRINNI) show a composition bias toward low complexity. Residues 128-178 (FHNNKRINNIPKPYNNYTNKPITNSSYKNDKQDYRNNNESNDNMNSNNFSN) form a disordered region. Residues 142–154 (NNYTNKPITNSSY) are compositionally biased toward polar residues. Residues 164 to 178 (NNESNDNMNSNNFSN) show a composition bias toward low complexity.

This sequence belongs to the U1 small nuclear ribonucleoprotein C family. As to quaternary structure, U1 snRNP is composed of the 7 core Sm proteins B/B', D1, D2, D3, E, F and G that assemble in a heptameric protein ring on the Sm site of the small nuclear RNA to form the core snRNP, and at least 3 U1 snRNP-specific proteins U1-70K, U1-A and U1-C. U1-C interacts with U1 snRNA and the 5' splice-site region of the pre-mRNA.

It localises to the nucleus. Its function is as follows. Component of the spliceosomal U1 snRNP, which is essential for recognition of the pre-mRNA 5' splice-site and the subsequent assembly of the spliceosome. U1-C is directly involved in initial 5' splice-site recognition for both constitutive and regulated alternative splicing. The interaction with the 5' splice-site seems to precede base-pairing between the pre-mRNA and the U1 snRNA. Stimulates commitment or early (E) complex formation by stabilizing the base pairing of the 5' end of the U1 snRNA and the 5' splice-site region. This Plasmodium berghei (strain Anka) protein is U1 small nuclear ribonucleoprotein C (SNRPC).